The primary structure comprises 65 residues: Large ribosomal subunit protein bL32 (65 aa).

The protein belongs to the bacterial ribosomal protein bL32 family.

In Tropheryma whipplei (strain TW08/27) (Whipple's bacillus), this protein is Large ribosomal subunit protein bL32.